Reading from the N-terminus, the 109-residue chain is CRISPR-associated endoribonuclease Cas2 (109 aa).

D8 contacts Mg(2+).

This sequence belongs to the CRISPR-associated endoribonuclease Cas2 protein family. As to quaternary structure, homodimer, forms a heterotetramer with a Cas1 homodimer. Mg(2+) serves as cofactor.

In terms of biological role, CRISPR (clustered regularly interspaced short palindromic repeat), is an adaptive immune system that provides protection against mobile genetic elements (viruses, transposable elements and conjugative plasmids). CRISPR clusters contain sequences complementary to antecedent mobile elements and target invading nucleic acids. CRISPR clusters are transcribed and processed into CRISPR RNA (crRNA). Functions as a ssRNA-specific endoribonuclease. Involved in the integration of spacer DNA into the CRISPR cassette. This chain is CRISPR-associated endoribonuclease Cas2, found in Streptococcus mutans serotype c (strain ATCC 700610 / UA159).